A 744-amino-acid chain; its full sequence is MAADKPADQGAEKHEGTGQSSGITDQEKELSTNAFQAFTSGNYDACLQHLACLQDINKDDYKIILNTAVAEFFKSNQTTTDNLRQTLNQLKNQVHSAVEEMDGLDDVENSMLYYNQAVILYHLRQYTEAISVGEKLYQFIEPFEEKFAQAVCFLLVDLYILTYQAEKALHLLAVLEKMISQGNNNKNGKNETGNNNNKDGSNHKAESGALIEAAKSKIHQYKVRAYIQMKSLKACKREIKSVMNTAGNSAPSLFLKSNFEYLRGNYRKAVKLLNSSNIAEHPGFMKTGECLRCMFWNNLGCIHFAMSKHNLGIFYFKKALQENDNVCAQLSAGSTDPGKKFSGRPMCTLLTNKRYELLYNCGIQLLHIGRPLAAFECLIEAVQVYHANPRLWLRLAECCIAANKGTSEQETKGLPSKKGIVQSIVGQGYHRKIVLASQSIQNTVYNDGQSSAIPVASMEFAAICLRNALLLLPEEQQDPKQENGAKNSNQLGGNTESSESSETCSSKSHDGDKFIPAPPSSPLRKQELENLKCSILACSAYVALALGDNLMALNHADKLLQQPKLSGSLKFLGHLYAAEALISLDRISDAITHLNPENVTDVSLGISSNEQDQGSDKGENEAMESSGKRAPQCYPSSVNSARTVMLFNLGSAYCLRSEYDKARKCLHQAASMIHPKEVPPEAILLAVYLELQNGNTQLALQIIKRNQLLPAVKTHSEVRKKPVFQPVHPIQPIQMPAFTTVQRK.

The segment covering Met1–Gly16 has biased composition (basic and acidic residues). A disordered region spans residues Met1–Asp25. Ala2 is modified (N-acetylalanine). Residues Lys74–Val107 adopt a coiled-coil conformation. The span at Asn183–Asp199 shows a compositional bias: low complexity. Disordered stretches follow at residues Asn183–Lys204, Gln477–Ser521, and Val602–Tyr634. A compositionally biased stretch (polar residues) spans Gly484–Thr495. Residues Glu496–Ser506 show a composition bias toward low complexity. Polar residues predominate over residues Val602–Asp612.

This sequence belongs to the CNOT10 family. As to quaternary structure, component of the CCR4-NOT complex; distinct complexes seem to exist that differ in the participation of probably mutually exclusive catalytic subunits. CNOT10 and CNOT11 form a subcomplex docked to the CNOT1 scaffold.

Its subcellular location is the cytoplasm. It localises to the nucleus. Its function is as follows. Component of the CCR4-NOT complex which is one of the major cellular mRNA deadenylases and is linked to various cellular processes including bulk mRNA degradation, miRNA-mediated repression, translational repression during translational initiation and general transcription regulation. Additional complex functions may be a consequence of its influence on mRNA expression. Is not required for association of CNOT7 to the CCR4-NOT complex. This Homo sapiens (Human) protein is CCR4-NOT transcription complex subunit 10 (CNOT10).